The primary structure comprises 220 residues: Octanoyltransferase (220 aa).

One can recognise a BPL/LPL catalytic domain in the interval 31 to 211 (GTAADHLLLL…HFARIFDFEM (181 aa)). Residues 76–83 (RGGDVTYH), 143–145 (AIG), and 156–158 (GFA) each bind substrate. The active-site Acyl-thioester intermediate is Cys-174.

It belongs to the LipB family.

The protein resides in the cytoplasm. The catalysed reaction is octanoyl-[ACP] + L-lysyl-[protein] = N(6)-octanoyl-L-lysyl-[protein] + holo-[ACP] + H(+). Its pathway is protein modification; protein lipoylation via endogenous pathway; protein N(6)-(lipoyl)lysine from octanoyl-[acyl-carrier-protein]: step 1/2. In terms of biological role, catalyzes the transfer of endogenously produced octanoic acid from octanoyl-acyl-carrier-protein onto the lipoyl domains of lipoate-dependent enzymes. Lipoyl-ACP can also act as a substrate although octanoyl-ACP is likely to be the physiological substrate. The protein is Octanoyltransferase of Solibacter usitatus (strain Ellin6076).